The chain runs to 295 residues: Small ribosomal subunit protein uS2 (295 aa).

Positions 273-295 are disordered; that stretch reads WAASSAPAAETLADPAADPSVKW. Over residues 274-295 the composition is skewed to low complexity; the sequence is AASSAPAAETLADPAADPSVKW.

The protein belongs to the universal ribosomal protein uS2 family. In terms of assembly, component of the small ribosomal subunit. Mature ribosomes consist of a small (40S) and a large (60S) subunit. The 40S subunit contains about 33 different proteins and 1 molecule of RNA (18S). The 60S subunit contains about 49 different proteins and 3 molecules of RNA (25S, 5.8S and 5S). Interacts with RPS21.

The protein resides in the cytoplasm. Required for the assembly and/or stability of the 40S ribosomal subunit. Required for the processing of the 20S rRNA-precursor to mature 18S rRNA in a late step of the maturation of 40S ribosomal subunits. The chain is Small ribosomal subunit protein uS2 from Paracoccidioides lutzii (strain ATCC MYA-826 / Pb01) (Paracoccidioides brasiliensis).